The primary structure comprises 171 residues: uncharacterized protein (171 aa).

The protein to A.aeolicus aq_616.

This is an uncharacterized protein from Aquifex aeolicus (strain VF5).